A 183-amino-acid chain; its full sequence is Endoribonuclease YbeY (183 aa).

Residues histidine 118, histidine 122, and histidine 128 each coordinate Zn(2+). Residues 156–183 form a disordered region; it reads EREQAQRSADSAVLGAVGLEEQDGPGTH.

It belongs to the endoribonuclease YbeY family. Zn(2+) is required as a cofactor.

Its subcellular location is the cytoplasm. Functionally, single strand-specific metallo-endoribonuclease involved in late-stage 70S ribosome quality control and in maturation of the 3' terminus of the 16S rRNA. The chain is Endoribonuclease YbeY from Saccharopolyspora erythraea (strain ATCC 11635 / DSM 40517 / JCM 4748 / NBRC 13426 / NCIMB 8594 / NRRL 2338).